A 559-amino-acid chain; its full sequence is Formate--tetrahydrofolate ligase (559 aa).

Threonine 68–threonine 75 provides a ligand contact to ATP.

It belongs to the formate--tetrahydrofolate ligase family.

The catalysed reaction is (6S)-5,6,7,8-tetrahydrofolate + formate + ATP = (6R)-10-formyltetrahydrofolate + ADP + phosphate. It participates in one-carbon metabolism; tetrahydrofolate interconversion. The polypeptide is Formate--tetrahydrofolate ligase (Rhizobium etli (strain ATCC 51251 / DSM 11541 / JCM 21823 / NBRC 15573 / CFN 42)).